Consider the following 109-residue polypeptide: Hainantoxin-XVIII.2 (109 aa).

Positions 1–18 are cleaved as a signal peptide; sequence MKLSIIIIVTSLVIAVVA. Residues 19 to 46 constitute a propeptide that is removed on maturation; the sequence is FPSKDSKAIENDKTEQRMEIVVQETARA. Intrachain disulfides connect cysteine 47–cysteine 62, cysteine 55–cysteine 68, cysteine 59–cysteine 108, and cysteine 61–cysteine 81.

Belongs to the neurotoxin 25 family. F7 subfamily. As to expression, expressed by the venom gland.

The protein resides in the secreted. Putative ion channel inhibitor. The sequence is that of Hainantoxin-XVIII.2 from Cyriopagopus hainanus (Chinese bird spider).